Consider the following 1829-residue polypeptide: Protein let-418 (1829 aa).

Composition is skewed to acidic residues over residues 1–17 (MSTEEDPSLVDAEESME) and 25–39 (ATEETEEEEEQEQGD). 2 disordered regions span residues 1 to 81 (MSTE…YNST) and 147 to 198 (MAAQ…SDQE). Positions 48–63 (RSSRKKGGKGGKKGSK) are enriched in basic residues. 2 consecutive PHD-type zinc fingers follow at residues 256–303 (NDYC…CIEH) and 317–365 (DEFC…CETV). 2 consecutive Chromo domains span residues 401 to 458 (LKPP…PPEF) and 489 to 550 (MQIH…NEDI). Residues 614 to 798 (RHCWSNGTDA…FHLLNFLSKE (185 aa)) form the Helicase ATP-binding domain. Residue 627-634 (DEMGLGKT) participates in ATP binding. Residues 749-752 (DEAH) carry the DEAH box motif. The 164-residue stretch at 930–1093 (LLQKMLRKLK…GKTMSKTELD (164 aa)) folds into the Helicase C-terminal domain. 4 disordered regions span residues 1168 to 1198 (ASYQTKETEGQEEEEEEETEVIKEDEKEPDP), 1234 to 1289 (SENM…MPPL), 1415 to 1495 (AANG…ARPS), and 1745 to 1829 (NGER…PMET). Residues 1177 to 1186 (GQEEEEEEET) show a composition bias toward acidic residues. Composition is skewed to polar residues over residues 1234 to 1247 (SENMGTDWSKQNQT) and 1418 to 1427 (GSAQGSSRST). Residues 1429-1444 (KPKEEPKEEPMEKEDA) are compositionally biased toward basic and acidic residues. The segment covering 1446 to 1455 (ETVNGATSEP) has biased composition (polar residues). The segment covering 1474–1490 (DEAKEPKEEPIETEKPR) has biased composition (basic and acidic residues). The segment covering 1749–1773 (MEEDEPVEAEEEEGVKQEPDDETQD) has biased composition (acidic residues). The segment covering 1792 to 1811 (DVPSTSAAAAVSSETAADAE) has biased composition (low complexity). A compositionally biased stretch (acidic residues) spans 1819–1829 (APTDEPEPMET).

As to quaternary structure, component of the MEC (MEP-1-containing complex) complex that contains let-418, mep-1 and hda-1. Component of a NURD complex that contains let-418, hda-1, lin-40 and lin-53. Interacts with lin-1. Interacts with pie-1. Interacts with akir-1. Expressed in embryos and larva.

Its subcellular location is the nucleus. Its function is as follows. Part of a NuRD (Nucleosome Remodeling and Deacetylase) complex which is implicated in the synMuv B pathway that negatively regulates specification of vulval cell fate. This negative regulation is thought to be mediated via interaction with the promoter of lin-39, a key regulator in vulva development, and is dependent on the presence lin-1. Contributes to negative regulation of lag-2 which is expressed in the gut during larval development. Has a broad role in development. In association with akir-1, plays a role in regulating the transcription of antimicrobial peptide genes in response to fungal infection. The polypeptide is Protein let-418 (Caenorhabditis elegans).